Consider the following 570-residue polypeptide: Urease subunit alpha (570 aa).

The Urease domain occupies glycine 131–phenylalanine 570. Histidine 136, histidine 138, and lysine 219 together coordinate Ni(2+). The residue at position 219 (lysine 219) is an N6-carboxylysine. Residue histidine 221 participates in substrate binding. Ni(2+)-binding residues include histidine 248 and histidine 274. Residue histidine 322 is the Proton donor of the active site. Position 362 (aspartate 362) interacts with Ni(2+).

This sequence belongs to the metallo-dependent hydrolases superfamily. Urease alpha subunit family. Heterotrimer of UreA (gamma), UreB (beta) and UreC (alpha) subunits. Three heterotrimers associate to form the active enzyme. Requires Ni cation as cofactor. Post-translationally, carboxylation allows a single lysine to coordinate two nickel ions.

It is found in the cytoplasm. The catalysed reaction is urea + 2 H2O + H(+) = hydrogencarbonate + 2 NH4(+). It participates in nitrogen metabolism; urea degradation; CO(2) and NH(3) from urea (urease route): step 1/1. The polypeptide is Urease subunit alpha (Allorhizobium ampelinum (strain ATCC BAA-846 / DSM 112012 / S4) (Agrobacterium vitis (strain S4))).